Reading from the N-terminus, the 179-residue chain is Large ribosomal subunit protein uL5 (179 aa).

This sequence belongs to the universal ribosomal protein uL5 family. In terms of assembly, part of the 50S ribosomal subunit; part of the 5S rRNA/L5/L18/L25 subcomplex. Contacts the 5S rRNA and the P site tRNA. Forms a bridge to the 30S subunit in the 70S ribosome.

Its function is as follows. This is one of the proteins that bind and probably mediate the attachment of the 5S RNA into the large ribosomal subunit, where it forms part of the central protuberance. In the 70S ribosome it contacts protein S13 of the 30S subunit (bridge B1b), connecting the 2 subunits; this bridge is implicated in subunit movement. Contacts the P site tRNA; the 5S rRNA and some of its associated proteins might help stabilize positioning of ribosome-bound tRNAs. In Citrobacter koseri (strain ATCC BAA-895 / CDC 4225-83 / SGSC4696), this protein is Large ribosomal subunit protein uL5.